We begin with the raw amino-acid sequence, 1909 residues long: DENN domain-containing protein 4C (1909 aa).

An MABP domain is found at 40–199 (KAPITDIAII…SVFLCYKKSV (160 aa)). The uDENN domain maps to 191–364 (VFLCYKKSVP…NIPFPSPQRP (174 aa)). The cDENN domain occupies 385–521 (PLPLSGANFS…PCKNLLSTLK (137 aa)). The region spanning 523–641 (LYPQLSSVHQ…CSFVSDKDTG (119 aa)) is the dDENN domain. Phosphoserine is present on residues S703, S737, and S741. A PPR repeat occupies 821-855 (VCYRVVMQLCGLWGHPVLAVRVLFEMKTARIKPNA). A phosphoserine mark is found at E953, S965, S968, and S973. Position 975 is a phosphothreonine (T975). Phosphoserine occurs at positions 989, 996, 1003, 1046, 1061, 1099, 1126, 1184, 1225, 1244, 1252, and 1278. Disordered regions lie at residues 1243 to 1263 (KSPL…NRES) and 1277 to 1338 (SSLP…HGSL). A compositionally biased stretch (polar residues) spans 1296-1316 (SSPAVSRSKTFTGRFKQQTPS). Residues S1325, S1337, and S1346 each carry the phosphoserine modification. The tract at residues 1419-1474 (SGLVPSELTQSNTSLGSSSSSGDVGKLHYPTGEVPFPRGMKGQDFEKSDHGSSQNT) is disordered. Over residues 1426–1440 (LTQSNTSLGSSSSSG) the composition is skewed to low complexity. Basic and acidic residues predominate over residues 1459–1468 (KGQDFEKSDH). S1623, S1627, S1629, S1640, and S1799 each carry phosphoserine.

In terms of processing, phosphorylated in response to insulin.

The protein resides in the cytoplasmic vesicle membrane. It is found in the cell membrane. It localises to the cytoplasm. Its subcellular location is the cytosol. Functionally, guanine nucleotide exchange factor (GEF) activating RAB10. Promotes the exchange of GDP to GTP, converting inactive GDP-bound RAB10 into its active GTP-bound form. Thereby, stimulates SLC2A4/GLUT4 glucose transporter-enriched vesicles delivery to the plasma membrane in response to insulin. The polypeptide is DENN domain-containing protein 4C (DENND4C) (Homo sapiens (Human)).